A 494-amino-acid chain; its full sequence is Glutamate--tRNA ligase (494 aa).

Positions 9-19 match the 'HIGH' region motif; the sequence is PSPTGDPHVGT. The short motif at 250–254 is the 'KMSKS' region element; it reads KLSKR. An ATP-binding site is contributed by Lys253.

The protein belongs to the class-I aminoacyl-tRNA synthetase family. Glutamate--tRNA ligase type 1 subfamily. As to quaternary structure, monomer.

It is found in the cytoplasm. It catalyses the reaction tRNA(Glu) + L-glutamate + ATP = L-glutamyl-tRNA(Glu) + AMP + diphosphate. Its function is as follows. Catalyzes the attachment of glutamate to tRNA(Glu) in a two-step reaction: glutamate is first activated by ATP to form Glu-AMP and then transferred to the acceptor end of tRNA(Glu). The sequence is that of Glutamate--tRNA ligase from Alcanivorax borkumensis (strain ATCC 700651 / DSM 11573 / NCIMB 13689 / SK2).